A 329-amino-acid chain; its full sequence is BTB/POZ domain-containing adapter for CUL3-mediated RhoA degradation protein 1 (329 aa).

Residues 1-15 (MSAEASGPAAAEAPS) show a composition bias toward low complexity. The segment at 1–21 (MSAEASGPAAAEAPSLEVAKP) is disordered. The region spanning 41 to 109 (KYVKLNVGGS…LRDGSVPLPE (69 aa)) is the BTB domain. The tract at residues 280-302 (LEATGGAAGGGGASRGEDEDNRE) is disordered.

It belongs to the BACURD family. In terms of assembly, homotetramer; forms a two-fold symmetric tetramer in solution. Interacts with CUL3; interaction is direct and forms a 5:5 heterodecamer. Component of the BCR(KCTD13) E3 ubiquitin ligase complex, at least composed of CUL3, KCTD13/BACURD1 and RBX1. Interacts with RHOA; with a preference for RhoA-GDP. Interacts with POLD2 and PCNA. Interacts with SPRTN.

The protein localises to the nucleus. It functions in the pathway protein modification; protein ubiquitination. Its function is as follows. Substrate-specific adapter of a BCR (BTB-CUL3-RBX1) E3 ubiquitin-protein ligase complex required for synaptic transmission. The BCR(KCTD13) E3 ubiquitin ligase complex mediates the ubiquitination of RHOA, leading to its degradation by the proteasome, thereby regulating the actin cytoskeleton and promoting synaptic transmission. This is BTB/POZ domain-containing adapter for CUL3-mediated RhoA degradation protein 1 (KCTD13) from Bos taurus (Bovine).